The sequence spans 112 residues: Prostatic steroid-binding protein C2 (112 aa).

The first 20 residues, 1–20, serve as a signal peptide directing secretion; it reads MRLSLCLLTILVVCCYEANG. Glutamine 21 bears the Pyrrolidone carboxylic acid mark.

The protein belongs to the secretoglobin family. Lipophilin subfamily. As to quaternary structure, prostatein is composed of three different peptides called C1, C2 and C3. These form covalent C1:C3 (F) and C2:C3 (S) heterodimers whose noncovalent association forms tetrameric (C1:C3/C3:C2) prostatein molecules. In terms of processing, linked by three disulfide bonds to C3. The N-terminus is blocked.

Its subcellular location is the secreted. In terms of biological role, part of prostatein which is the major secretory glycoprotein of ventral prostate gland. This is Prostatic steroid-binding protein C2 (Psbpc2) from Rattus norvegicus (Rat).